The primary structure comprises 192 residues: Fe/S biogenesis protein NfuA (192 aa).

[4Fe-4S] cluster-binding residues include Cys-149 and Cys-152.

Belongs to the NfuA family. In terms of assembly, homodimer. [4Fe-4S] cluster serves as cofactor.

Its function is as follows. Involved in iron-sulfur cluster biogenesis. Binds a 4Fe-4S cluster, can transfer this cluster to apoproteins, and thereby intervenes in the maturation of Fe/S proteins. Could also act as a scaffold/chaperone for damaged Fe/S proteins. The sequence is that of Fe/S biogenesis protein NfuA from Pseudoalteromonas atlantica (strain T6c / ATCC BAA-1087).